Consider the following 141-residue polypeptide: Large ribosomal subunit protein uL11 (141 aa).

It belongs to the universal ribosomal protein uL11 family. As to quaternary structure, part of the ribosomal stalk of the 50S ribosomal subunit. Interacts with L10 and the large rRNA to form the base of the stalk. L10 forms an elongated spine to which L12 dimers bind in a sequential fashion forming a multimeric L10(L12)X complex. One or more lysine residues are methylated.

Its function is as follows. Forms part of the ribosomal stalk which helps the ribosome interact with GTP-bound translation factors. The chain is Large ribosomal subunit protein uL11 from Chlorobium phaeobacteroides (strain BS1).